Here is a 334-residue protein sequence, read N- to C-terminus: Ketol-acid reductoisomerase (NADP(+)) (334 aa).

The KARI N-terminal Rossmann domain occupies 2-182 (PKMYYEKDTD…GGARAGVLET (181 aa)). Residues 25–28 (YGSQ), Ser51, Ser53, and 83–86 (DEKQ) each bind NADP(+). His108 is an active-site residue. An NADP(+)-binding site is contributed by Gly134. A KARI C-terminal knotted domain is found at 183-328 (TFKDETETDL…KELRGMMSWI (146 aa)). Residues Asp191, Glu195, Glu227, and Glu231 each contribute to the Mg(2+) site. Substrate is bound at residue Ser252.

Belongs to the ketol-acid reductoisomerase family. It depends on Mg(2+) as a cofactor.

It catalyses the reaction (2R)-2,3-dihydroxy-3-methylbutanoate + NADP(+) = (2S)-2-acetolactate + NADPH + H(+). The enzyme catalyses (2R,3R)-2,3-dihydroxy-3-methylpentanoate + NADP(+) = (S)-2-ethyl-2-hydroxy-3-oxobutanoate + NADPH + H(+). The protein operates within amino-acid biosynthesis; L-isoleucine biosynthesis; L-isoleucine from 2-oxobutanoate: step 2/4. It functions in the pathway amino-acid biosynthesis; L-valine biosynthesis; L-valine from pyruvate: step 2/4. Involved in the biosynthesis of branched-chain amino acids (BCAA). Catalyzes an alkyl-migration followed by a ketol-acid reduction of (S)-2-acetolactate (S2AL) to yield (R)-2,3-dihydroxy-isovalerate. In the isomerase reaction, S2AL is rearranged via a Mg-dependent methyl migration to produce 3-hydroxy-3-methyl-2-ketobutyrate (HMKB). In the reductase reaction, this 2-ketoacid undergoes a metal-dependent reduction by NADPH to yield (R)-2,3-dihydroxy-isovalerate. The sequence is that of Ketol-acid reductoisomerase (NADP(+)) from Clostridium beijerinckii (strain ATCC 51743 / NCIMB 8052) (Clostridium acetobutylicum).